We begin with the raw amino-acid sequence, 608 residues long: Microtubule-associated protein 70-3 (608 aa).

A disordered region spans residues methionine 1 to valine 23. Positions aspartate 40–lysine 346 form a coiled coil. The segment at isoleucine 224–valine 458 is required for targeting to microtubules. Disordered regions lie at residues leucine 354 to asparagine 493 and aspartate 570 to glutamine 608. The span at serine 363–proline 379 shows a compositional bias: polar residues. The segment covering arginine 402–leucine 421 has biased composition (low complexity). Residues isoleucine 476–asparagine 493 are compositionally biased toward polar residues. The stretch at leucine 542–lysine 576 forms a coiled coil. Residues threonine 586–glutamine 608 show a composition bias toward low complexity.

Belongs to the MAP70 family.

It is found in the cytoplasm. Its subcellular location is the cytoskeleton. Plant-specific protein that interact with microtubules. This chain is Microtubule-associated protein 70-3 (MAP70.3), found in Oryza sativa subsp. japonica (Rice).